A 288-amino-acid polypeptide reads, in one-letter code: Homoserine kinase (288 aa).

79-89 is an ATP binding site; sequence PPARGLGSSSA.

The protein belongs to the GHMP kinase family. Homoserine kinase subfamily.

The protein resides in the cytoplasm. It catalyses the reaction L-homoserine + ATP = O-phospho-L-homoserine + ADP + H(+). It participates in amino-acid biosynthesis; L-threonine biosynthesis; L-threonine from L-aspartate: step 4/5. In terms of biological role, catalyzes the ATP-dependent phosphorylation of L-homoserine to L-homoserine phosphate. This Listeria welshimeri serovar 6b (strain ATCC 35897 / DSM 20650 / CCUG 15529 / CIP 8149 / NCTC 11857 / SLCC 5334 / V8) protein is Homoserine kinase.